Consider the following 443-residue polypeptide: ATP-dependent protease ATPase subunit HslU (443 aa).

ATP-binding positions include I18, 60–65 (GVGKTE), D256, E321, and R393.

Belongs to the ClpX chaperone family. HslU subfamily. A double ring-shaped homohexamer of HslV is capped on each side by a ring-shaped HslU homohexamer. The assembly of the HslU/HslV complex is dependent on binding of ATP.

It is found in the cytoplasm. ATPase subunit of a proteasome-like degradation complex; this subunit has chaperone activity. The binding of ATP and its subsequent hydrolysis by HslU are essential for unfolding of protein substrates subsequently hydrolyzed by HslV. HslU recognizes the N-terminal part of its protein substrates and unfolds these before they are guided to HslV for hydrolysis. This Photorhabdus laumondii subsp. laumondii (strain DSM 15139 / CIP 105565 / TT01) (Photorhabdus luminescens subsp. laumondii) protein is ATP-dependent protease ATPase subunit HslU.